Consider the following 448-residue polypeptide: Tubulin beta chain (448 aa).

GTP is bound by residues glutamine 11, glutamate 69, serine 138, glycine 142, threonine 143, glycine 144, asparagine 204, and asparagine 226. Position 69 (glutamate 69) interacts with Mg(2+). The tract at residues 425-448 is disordered; the sequence is YQDASISEGEEEYLEEEEPLEHEE. Residues 432-448 are compositionally biased toward acidic residues; that stretch reads EGEEEYLEEEEPLEHEE.

This sequence belongs to the tubulin family. In terms of assembly, dimer of alpha and beta chains. A typical microtubule is a hollow water-filled tube with an outer diameter of 25 nm and an inner diameter of 15 nM. Alpha-beta heterodimers associate head-to-tail to form protofilaments running lengthwise along the microtubule wall with the beta-tubulin subunit facing the microtubule plus end conferring a structural polarity. Microtubules usually have 13 protofilaments but different protofilament numbers can be found in some organisms and specialized cells. Mg(2+) is required as a cofactor.

Its subcellular location is the cytoplasm. The protein resides in the cytoskeleton. Functionally, tubulin is the major constituent of microtubules, a cylinder consisting of laterally associated linear protofilaments composed of alpha- and beta-tubulin heterodimers. Microtubules grow by the addition of GTP-tubulin dimers to the microtubule end, where a stabilizing cap forms. Below the cap, tubulin dimers are in GDP-bound state, owing to GTPase activity of alpha-tubulin. The polypeptide is Tubulin beta chain (benA56) (Aspergillus oryzae (strain ATCC 42149 / RIB 40) (Yellow koji mold)).